The following is a 545-amino-acid chain: CTP synthase (545 aa).

Positions 1–266 (MTTNYIFVTG…DDYICKRFSL (266 aa)) are amidoligase domain. CTP is bound at residue Ser-14. Ser-14 is a binding site for UTP. Residues 15–20 (SLGKGI) and Asp-72 each bind ATP. 2 residues coordinate Mg(2+): Asp-72 and Glu-140. Residues 147–149 (DIE), 187–192 (KTKPTQ), and Lys-223 each bind CTP. UTP contacts are provided by residues 187-192 (KTKPTQ) and Lys-223. 239-241 (KDV) is a binding site for ATP. The Glutamine amidotransferase type-1 domain maps to 291-542 (TIGMVGKYIE…VKAASEYQKR (252 aa)). Position 352 (Gly-352) interacts with L-glutamine. Cys-379 (nucleophile; for glutamine hydrolysis) is an active-site residue. Residues 380–383 (LGMQ), Glu-403, and Arg-470 contribute to the L-glutamine site. Residues His-515 and Glu-517 contribute to the active site.

It belongs to the CTP synthase family. As to quaternary structure, homotetramer.

The catalysed reaction is UTP + L-glutamine + ATP + H2O = CTP + L-glutamate + ADP + phosphate + 2 H(+). It carries out the reaction L-glutamine + H2O = L-glutamate + NH4(+). The enzyme catalyses UTP + NH4(+) + ATP = CTP + ADP + phosphate + 2 H(+). Its pathway is pyrimidine metabolism; CTP biosynthesis via de novo pathway; CTP from UDP: step 2/2. Its activity is regulated as follows. Allosterically activated by GTP, when glutamine is the substrate; GTP has no effect on the reaction when ammonia is the substrate. The allosteric effector GTP functions by stabilizing the protein conformation that binds the tetrahedral intermediate(s) formed during glutamine hydrolysis. Inhibited by the product CTP, via allosteric rather than competitive inhibition. Catalyzes the ATP-dependent amination of UTP to CTP with either L-glutamine or ammonia as the source of nitrogen. Regulates intracellular CTP levels through interactions with the four ribonucleotide triphosphates. The protein is CTP synthase of Citrobacter koseri (strain ATCC BAA-895 / CDC 4225-83 / SGSC4696).